A 110-amino-acid polypeptide reads, in one-letter code: Thioredoxin (110 aa).

Residues 2–110 form the Thioredoxin domain; the sequence is SALLVEIDKD…IDAMIAKHVG (109 aa). Cys33 and Cys36 are joined by a disulfide.

It belongs to the thioredoxin family.

In terms of biological role, participates in various redox reactions through the reversible oxidation of its active center dithiol to a disulfide and catalyzes dithiol-disulfide exchange reactions. The sequence is that of Thioredoxin (trxA) from Peptoclostridium acidaminophilum (Eubacterium acidaminophilum).